We begin with the raw amino-acid sequence, 974 residues long: Protein bicaudal C homolog 1 (974 aa).

Positions 1–50 are disordered; it reads MAAQGEPGYLAAQSDPGSNSERSTDSPVPGSEDDLVAGATLHSPEWSEER. Serine 26, serine 31, and serine 43 each carry phosphoserine. KH domains lie at 132-199 and 284-348; these read RVTL…RVRI and PVST…RQYL. Lysine 398 bears the N6-acetyllysine mark. 3 positions are modified to phosphoserine: serine 576, serine 612, and serine 679. Disordered regions lie at residues 593 to 644, 665 to 719, and 783 to 846; these read VLSA…GDLK, GTKN…HLAP, and YKPT…KSTE. The segment covering 602–619 has biased composition (polar residues); that stretch reads SIQTSGSEQTSPKSSPTE. Residues 690–703 are compositionally biased toward basic and acidic residues; it reads LADKKAPGSERAAE. The SAM domain maps to 873–936; that stretch reads FKGSDLPELF…LLAISELNKN (64 aa).

Belongs to the BicC family. As to quaternary structure, interacts (via KH domains) with ANKS6 (via SAM domain) in an RNA-dependent manner. Interacts with ANKS3.

It localises to the cytoplasm. Putative RNA-binding protein. Acts as a negative regulator of Wnt signaling. May be involved in regulating gene expression during embryonic development. This Homo sapiens (Human) protein is Protein bicaudal C homolog 1 (BICC1).